Reading from the N-terminus, the 367-residue chain is uncharacterized protein (367 aa).

The 231-residue stretch at 4 to 234 (LTFEHVKKSY…PANLFVAGFI (231 aa)) folds into the ABC transporter domain. 36-43 (GPSGCGKS) contributes to the ATP binding site.

The protein belongs to the ABC transporter superfamily.

This is an uncharacterized protein from Bacillus subtilis (strain 168).